We begin with the raw amino-acid sequence, 443 residues long: Trigger factor (443 aa).

In terms of domain architecture, PPIase FKBP-type spans 165 to 250; sequence GDQVVMDFVG…IKEVKEPVAA (86 aa).

Belongs to the FKBP-type PPIase family. Tig subfamily.

Its subcellular location is the cytoplasm. The catalysed reaction is [protein]-peptidylproline (omega=180) = [protein]-peptidylproline (omega=0). Its function is as follows. Involved in protein export. Acts as a chaperone by maintaining the newly synthesized protein in an open conformation. Functions as a peptidyl-prolyl cis-trans isomerase. The sequence is that of Trigger factor from Ruegeria pomeroyi (strain ATCC 700808 / DSM 15171 / DSS-3) (Silicibacter pomeroyi).